The primary structure comprises 339 residues: Ketol-acid reductoisomerase (NADP(+)) (339 aa).

Positions 1–182 constitute a KARI N-terminal Rossmann domain; it reads MRVYYDRDAD…GGGRAGIIET (182 aa). NADP(+) contacts are provided by residues 24–27, Arg-48, Ser-51, Ser-53, and 83–86; these read YGSQ and DELQ. Residue His-108 is part of the active site. Gly-134 contacts NADP(+). The KARI C-terminal knotted domain maps to 183–328; it reads TFKEECETDL…ERLRGMMPWI (146 aa). 4 residues coordinate Mg(2+): Asp-191, Glu-195, Glu-227, and Glu-231. Ser-252 provides a ligand contact to substrate.

The protein belongs to the ketol-acid reductoisomerase family. Mg(2+) serves as cofactor.

The catalysed reaction is (2R)-2,3-dihydroxy-3-methylbutanoate + NADP(+) = (2S)-2-acetolactate + NADPH + H(+). It carries out the reaction (2R,3R)-2,3-dihydroxy-3-methylpentanoate + NADP(+) = (S)-2-ethyl-2-hydroxy-3-oxobutanoate + NADPH + H(+). Its pathway is amino-acid biosynthesis; L-isoleucine biosynthesis; L-isoleucine from 2-oxobutanoate: step 2/4. It functions in the pathway amino-acid biosynthesis; L-valine biosynthesis; L-valine from pyruvate: step 2/4. In terms of biological role, involved in the biosynthesis of branched-chain amino acids (BCAA). Catalyzes an alkyl-migration followed by a ketol-acid reduction of (S)-2-acetolactate (S2AL) to yield (R)-2,3-dihydroxy-isovalerate. In the isomerase reaction, S2AL is rearranged via a Mg-dependent methyl migration to produce 3-hydroxy-3-methyl-2-ketobutyrate (HMKB). In the reductase reaction, this 2-ketoacid undergoes a metal-dependent reduction by NADPH to yield (R)-2,3-dihydroxy-isovalerate. In Methylobacterium sp. (strain 4-46), this protein is Ketol-acid reductoisomerase (NADP(+)).